The sequence spans 78 residues: MNYLEGTIDFAGQLRCQKYMNYGLCTSAVISYIYGYLVQDSYCVIKLFLILASLVALVCLPAWSMYNKNPLKFQKKKE.

The Cytoplasmic segment spans residues 1 to 18 (MNYLEGTIDFAGQLRCQK). A helical transmembrane segment spans residues 19 to 38 (YMNYGLCTSAVISYIYGYLV). Topologically, residues 39–42 (QDSY) are lumenal. A helical membrane pass occupies residues 43-63 (CVIKLFLILASLVALVCLPAW). Over 64 to 78 (SMYNKNPLKFQKKKE) the chain is Cytoplasmic.

It belongs to the SPCS1 family. In terms of assembly, component of the signal peptidase complex (SPC) composed of a catalytic subunit sec11 and three accessory subunits spc1, spc2 and spc3. The complex induces a local thinning of the ER membrane which is used to measure the length of the signal peptide (SP) h-region of protein substrates. This ensures the selectivity of the complex towards h-regions shorter than 18-20 amino acids. SPC associates with the translocon complex.

The protein localises to the endoplasmic reticulum membrane. In terms of biological role, component of the signal peptidase complex (SPC) which catalyzes the cleavage of N-terminal signal sequences from nascent proteins as they are translocated into the lumen of the endoplasmic reticulum. Dispensable for SPC enzymatic activity. The polypeptide is Signal peptidase complex subunit 1 (Schizosaccharomyces pombe (strain 972 / ATCC 24843) (Fission yeast)).